The following is a 763-amino-acid chain: MAP7 domain-containing protein 2 (763 aa).

Over residues 1 to 11 (MERSGGNGAGA) the composition is skewed to gly residues. 3 disordered regions span residues 1 to 72 (MERS…REKC), 102 to 127 (LEEQ…LREE), and 140 to 531 (ERTQ…KAMI). Residues 12 to 31 (RAGAPSEGAAKGSSLLSAKS) show a composition bias toward low complexity. Over residues 53–72 (LKSDERQRLAKERREEREKC) the composition is skewed to basic and acidic residues. 2 stretches are compositionally biased toward polar residues: residues 184–212 (PSDT…NLPK) and 241–251 (LKSSYKSSPTR). Over residues 312 to 321 (KRSSSPVKSK) the composition is skewed to low complexity. 3 stretches are compositionally biased toward basic and acidic residues: residues 354 to 372 (ETLK…KEGA), 381 to 420 (PREE…EHSA), and 437 to 531 (LAEK…KAMI). Residues 434–575 (AKILAEKRRQ…QERLERKKRI (142 aa)) are a coiled coil.

The protein belongs to the MAP7 family. Interacts (via N-terminus) with microtubules; facilitates microtubule stabilization. Interacts with kinesin-1 family members, KIF5A, KIF5B and KIF5C. As to expression, detected only in the brain and testis (at the protein level).

Its subcellular location is the cytoplasm. The protein resides in the cytoskeleton. It localises to the microtubule organizing center. It is found in the centrosome. The protein localises to the cell projection. Its subcellular location is the axon. In terms of biological role, microtubule-stabilizing protein involved in the control of cell motility and neurite outgrowth. Acts as a critical cofactor for kinesin transport; in the proximal axon regulates kinesin-1 family members, KIF5A, KIF5B and KIF5C recruitment to microtubules and contributes to kinesin-1-mediated transport in the axons. The polypeptide is MAP7 domain-containing protein 2 (Map7d2) (Rattus norvegicus (Rat)).